We begin with the raw amino-acid sequence, 79 residues long: Protein B6 (79 aa).

This Human herpesvirus 6B (strain Z29) (HHV-6 variant B) protein is Protein B6 (B6).